Here is a 226-residue protein sequence, read N- to C-terminus: UPF0173 metal-dependent hydrolase Dgeo_0136 (226 aa).

This sequence belongs to the UPF0173 family.

The polypeptide is UPF0173 metal-dependent hydrolase Dgeo_0136 (Deinococcus geothermalis (strain DSM 11300 / CIP 105573 / AG-3a)).